The following is a 147-amino-acid chain: Effector TSP1 (147 aa).

Positions 1 to 19 are cleaved as a signal peptide; it reads MQITKTLVATLFAASTAFA. Cystine bridges form between Cys-44/Cys-51 and Cys-67/Cys-87.

As to quaternary structure, homodimer.

Its subcellular location is the secreted. Stimulates salicylic acid signaling in host plant roots. The chain is Effector TSP1 from Hypocrea virens (strain Gv29-8 / FGSC 10586) (Gliocladium virens).